Reading from the N-terminus, the 568-residue chain is Glucose-6-phosphate isomerase, cytosolic 1 (568 aa).

The active-site Proton donor is E360. Residues H391 and K516 contribute to the active site.

Belongs to the GPI family. As to quaternary structure, homodimer.

The protein resides in the cytoplasm. The enzyme catalyses alpha-D-glucose 6-phosphate = beta-D-fructose 6-phosphate. Its pathway is carbohydrate degradation; glycolysis; D-glyceraldehyde 3-phosphate and glycerone phosphate from D-glucose: step 2/4. The polypeptide is Glucose-6-phosphate isomerase, cytosolic 1 (PGIC1) (Clarkia arcuata (Glandular clarkia)).